A 631-amino-acid chain; its full sequence is Phosphomethylpyrimidine synthase (631 aa).

Residues Asn-239, Met-268, Tyr-297, His-333, Ser-353–Gly-355, Asp-394–Arg-397, and Glu-433 contribute to the substrate site. His-437 provides a ligand contact to Zn(2+). Residue Tyr-460 participates in substrate binding. His-501 is a Zn(2+) binding site. [4Fe-4S] cluster-binding residues include Cys-581, Cys-584, and Cys-589.

Belongs to the ThiC family. In terms of assembly, homodimer. The cofactor is [4Fe-4S] cluster.

The catalysed reaction is 5-amino-1-(5-phospho-beta-D-ribosyl)imidazole + S-adenosyl-L-methionine = 4-amino-2-methyl-5-(phosphooxymethyl)pyrimidine + CO + 5'-deoxyadenosine + formate + L-methionine + 3 H(+). It participates in cofactor biosynthesis; thiamine diphosphate biosynthesis. In terms of biological role, catalyzes the synthesis of the hydroxymethylpyrimidine phosphate (HMP-P) moiety of thiamine from aminoimidazole ribotide (AIR) in a radical S-adenosyl-L-methionine (SAM)-dependent reaction. The sequence is that of Phosphomethylpyrimidine synthase from Salmonella enteritidis PT4 (strain P125109).